The sequence spans 254 residues: Ribonuclease HII (254 aa).

The RNase H type-2 domain maps to 70–254 (TCIAGIDEAG…SFAPVKSVIS (185 aa)). A divalent metal cation contacts are provided by D76, E77, and D168.

This sequence belongs to the RNase HII family. The cofactor is Mn(2+). Requires Mg(2+) as cofactor.

It is found in the cytoplasm. The enzyme catalyses Endonucleolytic cleavage to 5'-phosphomonoester.. In terms of biological role, endonuclease that specifically degrades the RNA of RNA-DNA hybrids. In Bacillus pumilus (strain SAFR-032), this protein is Ribonuclease HII.